We begin with the raw amino-acid sequence, 613 residues long: Leucine aminopeptidase 2 (613 aa).

A peptide contacts are provided by residues 134–136 and 265–270; these read QAQ and PYGGME. A Zn(2+)-binding site is contributed by His-294. Residue Glu-295 is the Proton acceptor of the active site. His-298 and Glu-317 together coordinate Zn(2+). Tyr-382 functions as the Proton donor in the catalytic mechanism.

Belongs to the peptidase M1 family. Requires Zn(2+) as cofactor.

The protein resides in the cytoplasm. It localises to the nucleus. The catalysed reaction is an epoxide + H2O = an ethanediol. Aminopeptidase that preferentially cleaves di- and tripeptides. Also has low epoxide hydrolase activity (in vitro). Can hydrolyze the epoxide leukotriene LTA(4) but it forms preferentially 5,6-dihydroxy-7,9,11,14-eicosatetraenoic acid rather than the cytokine leukotriene B(4) as the product compared to the homologous mammalian enzyme (in vitro). The chain is Leucine aminopeptidase 2 from Pyricularia oryzae (strain 70-15 / ATCC MYA-4617 / FGSC 8958) (Rice blast fungus).